The following is a 502-amino-acid chain: UDP-N-acetylmuramate--L-alanine ligase (502 aa).

Position 119–125 (119–125 (GSHGKST)) interacts with ATP.

Belongs to the MurCDEF family.

It localises to the cytoplasm. The catalysed reaction is UDP-N-acetyl-alpha-D-muramate + L-alanine + ATP = UDP-N-acetyl-alpha-D-muramoyl-L-alanine + ADP + phosphate + H(+). It functions in the pathway cell wall biogenesis; peptidoglycan biosynthesis. Cell wall formation. The chain is UDP-N-acetylmuramate--L-alanine ligase from Frankia casuarinae (strain DSM 45818 / CECT 9043 / HFP020203 / CcI3).